The chain runs to 416 residues: Glutamyl-tRNA reductase (416 aa).

Substrate-binding positions include 49–52, serine 105, 110–112, and glutamine 116; these read TCNR and EPQ. Cysteine 50 acts as the Nucleophile in catalysis. 185–190 contacts NADP(+); the sequence is GAGETI.

It belongs to the glutamyl-tRNA reductase family. Homodimer.

It carries out the reaction (S)-4-amino-5-oxopentanoate + tRNA(Glu) + NADP(+) = L-glutamyl-tRNA(Glu) + NADPH + H(+). It functions in the pathway porphyrin-containing compound metabolism; protoporphyrin-IX biosynthesis; 5-aminolevulinate from L-glutamyl-tRNA(Glu): step 1/2. In terms of biological role, catalyzes the NADPH-dependent reduction of glutamyl-tRNA(Glu) to glutamate 1-semialdehyde (GSA). The chain is Glutamyl-tRNA reductase from Shewanella oneidensis (strain ATCC 700550 / JCM 31522 / CIP 106686 / LMG 19005 / NCIMB 14063 / MR-1).